We begin with the raw amino-acid sequence, 643 residues long: Probable potassium transport system protein Kup 2 (643 aa).

The segment at 1–20 is disordered; sequence MSSHVPSFLRGTPDMTAHGG. The next 12 membrane-spanning stretches (helical) occupy residues 27 to 47, 70 to 90, 120 to 140, 157 to 177, 185 to 205, 231 to 251, 267 to 287, 300 to 320, 357 to 377, 389 to 409, 419 to 439, and 440 to 460; these read VAGL…TSPL, VLSL…VIII, LMVS…SIIT, PHLE…LFAI, VGKM…ILGI, GWHA…AEAL, WYLL…ALLI, LAPA…TVIA, IYLP…VVGF, VAVT…MLLI, WLIG…SIKI, and PDGG…LTTW.

Belongs to the HAK/KUP transporter (TC 2.A.72) family.

The protein localises to the cell inner membrane. The catalysed reaction is K(+)(in) + H(+)(in) = K(+)(out) + H(+)(out). Transport of potassium into the cell. Likely operates as a K(+):H(+) symporter. In Paramagnetospirillum magneticum (strain ATCC 700264 / AMB-1) (Magnetospirillum magneticum), this protein is Probable potassium transport system protein Kup 2.